The following is a 172-amino-acid chain: Stellate protein CG33247 (172 aa).

The protein belongs to the casein kinase 2 subunit beta family. In terms of assembly, interacts in vitro with the casein kinase 2 alpha subunit (CkII-alpha). The relevance of such interaction is however unclear in vivo. As to expression, probably not expressed in wild-type flies. In males lacking the Y chromosome, it is testis-specific and constitutes the main component of star-shaped crystals.

Its function is as follows. Unknown. In males lacking the Y chromosome, its strong overexpression leads to the appearance of proteinaceous star-shaped crystals in the primary spermatocytes causing meiotic drive, possibly by interfering with normal casein kinase 2 activity. This is Stellate protein CG33247 (Ste:CG33247) from Drosophila melanogaster (Fruit fly).